A 291-amino-acid chain; its full sequence is 4-hydroxy-tetrahydrodipicolinate synthase (291 aa).

Pyruvate is bound at residue threonine 45. Catalysis depends on tyrosine 133, which acts as the Proton donor/acceptor. The active-site Schiff-base intermediate with substrate is the lysine 161. Isoleucine 203 provides a ligand contact to pyruvate.

Belongs to the DapA family. In terms of assembly, homotetramer; dimer of dimers.

The protein localises to the cytoplasm. It catalyses the reaction L-aspartate 4-semialdehyde + pyruvate = (2S,4S)-4-hydroxy-2,3,4,5-tetrahydrodipicolinate + H2O + H(+). Its pathway is amino-acid biosynthesis; L-lysine biosynthesis via DAP pathway; (S)-tetrahydrodipicolinate from L-aspartate: step 3/4. Catalyzes the condensation of (S)-aspartate-beta-semialdehyde [(S)-ASA] and pyruvate to 4-hydroxy-tetrahydrodipicolinate (HTPA). This Laribacter hongkongensis (strain HLHK9) protein is 4-hydroxy-tetrahydrodipicolinate synthase.